The chain runs to 190 residues: Small ribosomal subunit protein uS4 (190 aa).

In terms of domain architecture, S4 RNA-binding spans arginine 106–alanine 178. Residues glycine 166–glutamate 190 form a disordered region. The span at glycine 169–alanine 179 shows a compositional bias: basic residues.

This sequence belongs to the universal ribosomal protein uS4 family.

This chain is Small ribosomal subunit protein uS4, found in Trypanosoma brucei brucei.